A 547-amino-acid chain; its full sequence is Dihydrolipoyllysine-residue acetyltransferase component of pyruvate dehydrogenase complex (547 aa).

One can recognise a Lipoyl-binding 1 domain in the interval 2-75; the sequence is SELIRVPDIG…KEGDEILELE (74 aa). Lysine 41 carries the N6-lipoyllysine modification. Positions 75-117 are disordered; that stretch reads EVEGGEQPAEAKAEAAPAQPEAPKAEAPAPAPSESKPAAPAAA. Over residues 80 to 117 the composition is skewed to low complexity; the sequence is EQPAEAKAEAAPAQPEAPKAEAPAPAPSESKPAAPAAA. The Lipoyl-binding 2 domain occupies 119 to 193; the sequence is VQDIKVPDIG…GTGDLILKLK (75 aa). N6-lipoyllysine is present on lysine 159. Residues 202 to 231 are compositionally biased toward low complexity; it reads EEQPAAAPAQAAAPAAEQKPAAAAPAPAKA. The interval 202 to 248 is disordered; sequence EEQPAAAPAQAAAPAAEQKPAAAAPAPAKADTPAPVGAPSRDGAKVH. In terms of domain architecture, Peripheral subunit-binding (PSBD) spans 248–285; sequence HAGPAVRMLAREFGVELSEVKASGPKGRILKEDVQVFV. Histidine 520 is an active-site residue.

The protein belongs to the 2-oxoacid dehydrogenase family. Forms a 24-polypeptide structural core with octahedral symmetry. It depends on (R)-lipoate as a cofactor.

It carries out the reaction N(6)-[(R)-dihydrolipoyl]-L-lysyl-[protein] + acetyl-CoA = N(6)-[(R)-S(8)-acetyldihydrolipoyl]-L-lysyl-[protein] + CoA. Its function is as follows. The pyruvate dehydrogenase complex catalyzes the overall conversion of pyruvate to acetyl-CoA and CO(2). It contains multiple copies of three enzymatic components: pyruvate dehydrogenase (E1), dihydrolipoamide acetyltransferase (E2) and lipoamide dehydrogenase (E3). This is Dihydrolipoyllysine-residue acetyltransferase component of pyruvate dehydrogenase complex (aceF) from Pseudomonas aeruginosa (strain ATCC 15692 / DSM 22644 / CIP 104116 / JCM 14847 / LMG 12228 / 1C / PRS 101 / PAO1).